The sequence spans 212 residues: Large ribosomal subunit protein uL3 (212 aa).

The segment at 136-155 (THGNSLSHRSNGSIGQNQTP) is disordered. An N5-methylglutamine modification is found at Gln153.

Belongs to the universal ribosomal protein uL3 family. Part of the 50S ribosomal subunit. Forms a cluster with proteins L14 and L19. Methylated by PrmB.

One of the primary rRNA binding proteins, it binds directly near the 3'-end of the 23S rRNA, where it nucleates assembly of the 50S subunit. The protein is Large ribosomal subunit protein uL3 of Shewanella baltica (strain OS223).